The sequence spans 304 residues: Acetylglutamate kinase (304 aa).

Residues 82 to 83 (GG), arginine 104, and asparagine 197 contribute to the substrate site.

The protein belongs to the acetylglutamate kinase family. ArgB subfamily.

The protein localises to the cytoplasm. The catalysed reaction is N-acetyl-L-glutamate + ATP = N-acetyl-L-glutamyl 5-phosphate + ADP. Its pathway is amino-acid biosynthesis; L-arginine biosynthesis; N(2)-acetyl-L-ornithine from L-glutamate: step 2/4. In terms of biological role, catalyzes the ATP-dependent phosphorylation of N-acetyl-L-glutamate. This Prochlorococcus marinus (strain SARG / CCMP1375 / SS120) protein is Acetylglutamate kinase.